Here is a 206-residue protein sequence, read N- to C-terminus: Large ribosomal subunit protein uL4 (206 aa).

The span at 42-54 shows a compositional bias: polar residues; that stretch reads RRQQGTHQSQGRS. A disordered region spans residues 42–94; sequence RRQQGTHQSQGRSDVSRTGAKMFKQKGTGRARHSSARAPQFRGGGKAHGPVFR. Basic residues predominate over residues 64–76; the sequence is FKQKGTGRARHSS.

It belongs to the universal ribosomal protein uL4 family. As to quaternary structure, part of the 50S ribosomal subunit.

Its function is as follows. One of the primary rRNA binding proteins, this protein initially binds near the 5'-end of the 23S rRNA. It is important during the early stages of 50S assembly. It makes multiple contacts with different domains of the 23S rRNA in the assembled 50S subunit and ribosome. In terms of biological role, forms part of the polypeptide exit tunnel. This chain is Large ribosomal subunit protein uL4, found in Bartonella tribocorum (strain CIP 105476 / IBS 506).